Here is a 337-residue protein sequence, read N- to C-terminus: Glycerol-3-phosphate dehydrogenase [NAD(P)+] (337 aa).

NADPH contacts are provided by Trp-12 and Lys-107. Sn-glycerol 3-phosphate contacts are provided by Lys-107, Gly-138, and Thr-140. Ala-142 lines the NADPH pocket. Residues Lys-193, Asp-246, Ser-256, Arg-257, and Asn-258 each contribute to the sn-glycerol 3-phosphate site. Lys-193 (proton acceptor) is an active-site residue. Residue Arg-257 coordinates NADPH. The NADPH site is built by Val-282 and Glu-284.

Belongs to the NAD-dependent glycerol-3-phosphate dehydrogenase family.

It is found in the cytoplasm. It carries out the reaction sn-glycerol 3-phosphate + NAD(+) = dihydroxyacetone phosphate + NADH + H(+). The catalysed reaction is sn-glycerol 3-phosphate + NADP(+) = dihydroxyacetone phosphate + NADPH + H(+). Its pathway is membrane lipid metabolism; glycerophospholipid metabolism. Its function is as follows. Catalyzes the reduction of the glycolytic intermediate dihydroxyacetone phosphate (DHAP) to sn-glycerol 3-phosphate (G3P), the key precursor for phospholipid synthesis. This Koribacter versatilis (strain Ellin345) protein is Glycerol-3-phosphate dehydrogenase [NAD(P)+].